Here is a 518-residue protein sequence, read N- to C-terminus: Glutamate--cysteine ligase (518 aa).

Belongs to the glutamate--cysteine ligase type 1 family. Type 1 subfamily.

The enzyme catalyses L-cysteine + L-glutamate + ATP = gamma-L-glutamyl-L-cysteine + ADP + phosphate + H(+). Its pathway is sulfur metabolism; glutathione biosynthesis; glutathione from L-cysteine and L-glutamate: step 1/2. The chain is Glutamate--cysteine ligase from Shigella flexneri serotype 5b (strain 8401).